A 1159-amino-acid polypeptide reads, in one-letter code: ATP-dependent helicase/deoxyribonuclease subunit B (1159 aa).

In terms of domain architecture, UvrD-like helicase ATP-binding spans 1–275 (MEFNTYIGRA…TYFNTFYRYN (275 aa)). Residue 8 to 15 (GRAGTGKS) participates in ATP binding. Positions 269–583 (NTFYRYNNDD…SIGTMDLAKV (315 aa)) constitute a UvrD-like helicase C-terminal domain. Positions 784, 1112, 1115, and 1121 each coordinate [4Fe-4S] cluster.

This sequence belongs to the helicase family. AddB/RexB type 1 subfamily. In terms of assembly, heterodimer of AddA and AddB. The cofactor is Mg(2+). Requires [4Fe-4S] cluster as cofactor.

Functionally, the heterodimer acts as both an ATP-dependent DNA helicase and an ATP-dependent, dual-direction single-stranded exonuclease. Recognizes the chi site generating a DNA molecule suitable for the initiation of homologous recombination. The AddB subunit has 5' -&gt; 3' nuclease activity but not helicase activity. The chain is ATP-dependent helicase/deoxyribonuclease subunit B from Staphylococcus epidermidis (strain ATCC 35984 / DSM 28319 / BCRC 17069 / CCUG 31568 / BM 3577 / RP62A).